The following is a 440-amino-acid chain: Glycerophosphocholine cholinephosphodiesterase ENPP6 (440 aa).

Positions methionine 1–alanine 22 are cleaved as a signal peptide. Substrate contacts are provided by aspartate 32, serine 71, and asparagine 92. The Zn(2+) site is built by aspartate 32 and serine 71. Serine 71 serves as the catalytic Nucleophile. Phosphoserine is present on serine 71. 2 N-linked (GlcNAc...) asparagine glycosylation sites follow: asparagine 100 and asparagine 118. A disulfide bond links cysteine 142 and cysteine 154. Residue aspartate 193 participates in substrate binding. Residues aspartate 193, histidine 197, aspartate 240, and histidine 241 each contribute to the Zn(2+) site. Histidine 241 is a binding site for substrate. An N-linked (GlcNAc...) asparagine glycan is attached at asparagine 341. Histidine 354 serves as a coordination point for substrate. Residue histidine 354 coordinates Zn(2+). N-linked (GlcNAc...) asparagine glycosylation occurs at asparagine 404. Serine 419 carries the GPI-anchor amidated serine lipid modification. Residues serine 420–valine 440 constitute a propeptide, removed in mature form.

This sequence belongs to the nucleotide pyrophosphatase/phosphodiesterase family. In terms of assembly, homodimer; disulfide-linked. Homotetramer. Zn(2+) is required as a cofactor.

Its subcellular location is the cell membrane. It catalyses the reaction sn-glycerol 3-phosphocholine + H2O = phosphocholine + glycerol + H(+). The enzyme catalyses a 1-acyl-sn-glycero-3-phosphocholine + H2O = a 1-acyl-sn-glycerol + phosphocholine + H(+). The catalysed reaction is a 1-O-alkyl-sn-glycero-3-phosphocholine + H2O = a 1-O-alkyl-sn-glycerol + phosphocholine + H(+). It carries out the reaction 1-dodecanoyl-sn-glycero-3-phosphocholine + H2O = 1-dodecanoyl-sn-glycerol + phosphocholine + H(+). It catalyses the reaction 1-hexadecanoyl-sn-glycero-3-phosphocholine + H2O = 1-hexadecanoyl-sn-glycerol + phosphocholine + H(+). The enzyme catalyses 1-(5Z,8Z,11Z,14Z-eicosatetraenoyl)-sn-glycero-3-phosphocholine + H2O = 1-(5Z,8Z,11Z,14Z-eicosatetraenoyl)-sn-glycerol + phosphocholine + H(+). The catalysed reaction is 1-tetradecanoyl-sn-glycero-3-phosphocholine + H2O = 1-tetradecanoyl-sn-glycerol + phosphocholine + H(+). It carries out the reaction sphing-4-enine-phosphocholine + H2O = sphing-4-enine + phosphocholine + H(+). It catalyses the reaction 1-(9Z-octadecenoyl)-sn-glycero-3-phosphocholine + H2O = 1-(9Z-octadecenoyl)-sn-glycerol + phosphocholine + H(+). The enzyme catalyses 1-(9Z,12Z)-octadecadienoyl-sn-glycero-3-phosphocholine + H2O = 1-(9Z,12Z-octadecadienoyl)-sn-glycerol + phosphocholine + H(+). The catalysed reaction is glycero-2-phosphocholine + H2O = phosphocholine + glycerol + H(+). With respect to regulation, inhibited by EDTA and EGTA in vitro. Its function is as follows. Choline-specific glycerophosphodiesterase that hydrolyzes glycerophosphocholine (GPC) and lysophosphatidylcholine (LPC) and contributes to supplying choline to the cells. Has a preference for LPC with short (12:0 and 14:0) or polyunsaturated (18:2 and 20:4) fatty acids. In vitro, hydrolyzes only choline-containing lysophospholipids, such as sphingosylphosphorylcholine (SPC), platelet-activating factor (PAF) and lysoPAF, but not other lysophospholipids. The chain is Glycerophosphocholine cholinephosphodiesterase ENPP6 from Rattus norvegicus (Rat).